The following is a 208-amino-acid chain: Putative 3-methyladenine DNA glycosylase (208 aa).

The protein belongs to the DNA glycosylase MPG family.

The protein is Putative 3-methyladenine DNA glycosylase of Lactobacillus delbrueckii subsp. bulgaricus (strain ATCC 11842 / DSM 20081 / BCRC 10696 / JCM 1002 / NBRC 13953 / NCIMB 11778 / NCTC 12712 / WDCM 00102 / Lb 14).